Reading from the N-terminus, the 330-residue chain is mRNA-capping enzyme (330 aa).

The N6-GMP-lysine intermediate role is filled by lysine 82.

It belongs to the eukaryotic GTase family. Monomer. Requires Mg(2+) as cofactor. Mn(2+) is required as a cofactor.

The enzyme catalyses a 5'-end diphospho-ribonucleoside in mRNA + GTP + H(+) = a 5'-end (5'-triphosphoguanosine)-ribonucleoside in mRNA + diphosphate. Functionally, mRNA capping. Transfers a GMP cap onto the end of mRNA that terminates with a 5'-diphosphate tail. This Chlorella (PBCV-1) protein is mRNA-capping enzyme.